The following is a 796-amino-acid chain: Histone acetyltransferase KAT2B (796 aa).

Disordered regions lie at residues 1-32, 77-97, and 371-408; these read MSESTGIPQGSPAVGAAGSAPAAPGVGGTECS, WKSQNPPPTPPPPTPPRAEQP, and AGGGSVSPARKTASVLEPNPGGEKRKPAEPLSHEDSKR. Positions 10–24 are enriched in low complexity; sequence GSPAVGAAGSAPAAP. Pro residues predominate over residues 81–94; the sequence is NPPPTPPPPTPPRA. Positions 392-408 are enriched in basic and acidic residues; that stretch reads GEKRKPAEPLSHEDSKR. Residues 469–617 form the N-acetyltransferase domain; that stretch reads LNQKPNKKIL…GATLMGCELN (149 aa). E536 serves as the catalytic Proton donor/acceptor. Acetyl-CoA is bound by residues 540–542, 547–553, and 578–581; these read CAV, QVKGYGT, and YAIG. The Bromo domain occupies 687–791; the sequence is KDPDQLYSTL…KFFYTKIKEA (105 aa).

The protein belongs to the acetyltransferase family. GCN5 subfamily.

The protein resides in the nucleus. It is found in the cytoplasm. The protein localises to the cytoskeleton. It localises to the microtubule organizing center. Its subcellular location is the centrosome. It catalyses the reaction L-lysyl-[histone] + acetyl-CoA = N(6)-acetyl-L-lysyl-[histone] + CoA + H(+). It carries out the reaction L-lysyl-[protein] + acetyl-CoA = N(6)-acetyl-L-lysyl-[protein] + CoA + H(+). The enzyme catalyses spermidine + acetyl-CoA = N(8)-acetylspermidine + CoA + H(+). Its function is as follows. Functions as a histone acetyltransferase (HAT) to promote transcriptional activation. Has significant histone acetyltransferase activity with core histones (H3 and H4), and also with nucleosome core particles. Has a a strong preference for acetylation of H3 at 'Lys-9' (H3K9ac). Also acetylates non-histone proteins. Involved in heart and limb development by mediating acetylation of tbx5. Also acetylates spermidine. Together with kat2a, required for growth and differentiation of craniofacial cartilage and bone by regulating acetylation of histone H3 at 'Lys-9' (H3K9ac). This chain is Histone acetyltransferase KAT2B, found in Danio rerio (Zebrafish).